A 263-amino-acid chain; its full sequence is Cell division coordinator CpoB (263 aa).

Residues 1–26 (MSSNFRHQLLSLSLLVGIAAPWAAFA) form the signal peptide. Positions 44-88 (QLERISNAHSQLLTQLQQQLSDNQSDIDSLRGQIQENQYQLNQVV) form a coiled coil. Positions 106-123 (AAAQSTSGDQSGAAASTT) are enriched in low complexity. A disordered region spans residues 106–139 (AAAQSTSGDQSGAAASTTPTADAGTANAGAPVKS). TPR repeat units follow at residues 143 to 176 (NTDY…YPDS), 180 to 213 (PNAN…YPKS), and 217 to 250 (ADAM…YPGT).

The protein belongs to the CpoB family. Homotrimer. Interacts directly with the central domain of TolA and with PBP1B. Binding to TolA disrupts the homotrimer to form a YbgF/TolA heterodimer with weak affinity. Forms a quaternary complex with PBP1B-LpoB and TolA.

The protein resides in the periplasm. Functionally, mediates coordination of peptidoglycan synthesis and outer membrane constriction during cell division. Promotes physical and functional coordination of the PBP1B-LpoB and Tol machines, and regulates PBP1B activity in response to Tol energy state. The chain is Cell division coordinator CpoB from Escherichia coli (strain K12).